A 357-amino-acid polypeptide reads, in one-letter code: Aminotransferase TOXF (357 aa).

R87 is a pyridoxal 5'-phosphate binding site. K188 bears the N6-(pyridoxal phosphate)lysine mark. E227 is a pyridoxal 5'-phosphate binding site.

This sequence belongs to the class-IV pyridoxal-phosphate-dependent aminotransferase family. The cofactor is pyridoxal 5'-phosphate.

It functions in the pathway mycotoxin biosynthesis; HC-toxin biosynthesis. Its function is as follows. Aminotransferase, part of the diffuse TOX2 gene cluster that mediates the biosynthesis of the HC-toxin, cyclic tetrapeptide of structure cyclo(D-Pro-L-Ala-D-Ala-L-Aeo), where Aeo stands for 2-amino-9,10-epoxi-8-oxodecanoic acid. HC-toxin is a determinant of specificity and virulence in the interaction between the producing fungus and its host, maize. TOXF contributes to the synthesis of 2-amino-9,10-epoxi-8-oxodecanoic acid, an essential precursor for the production of the major forms of HC-toxin by the non-ribosomal peptide synthetase HTS1. The sequence is that of Aminotransferase TOXF (TOXF) from Cochliobolus carbonum (Maize leaf spot fungus).